Consider the following 146-residue polypeptide: Hemoglobin subunit beta (146 aa).

N-acetylvaline is present on valine 1. Positions 2 to 146 (HLTPDEKNAV…VANALAHKYH (145 aa)) constitute a Globin domain. Threonine 12 is modified (phosphothreonine). At serine 44 the chain carries Phosphoserine. Lysine 59 bears the N6-acetyllysine mark. Histidine 63 contacts heme b. Lysine 82 is subject to N6-acetyllysine. Residue histidine 92 participates in heme b binding. Cysteine 93 is modified (S-nitrosocysteine). At lysine 144 the chain carries N6-acetyllysine.

The protein belongs to the globin family. In terms of assembly, heterotetramer of two alpha chains and two beta chains. As to expression, red blood cells.

Its function is as follows. Involved in oxygen transport from the lung to the various peripheral tissues. In Piliocolobus badius (Western red colobus), this protein is Hemoglobin subunit beta (HBB).